The sequence spans 300 residues: N-acetylmuramic acid 6-phosphate etherase (300 aa).

The SIS domain maps to 57 to 220; that stretch reads ITHAFAHGGR…TSGAMIRSGK (164 aa). E85 acts as the Proton donor in catalysis. The active site involves E116.

Belongs to the GCKR-like family. MurNAc-6-P etherase subfamily. As to quaternary structure, homodimer.

The enzyme catalyses N-acetyl-D-muramate 6-phosphate + H2O = N-acetyl-D-glucosamine 6-phosphate + (R)-lactate. The protein operates within amino-sugar metabolism; 1,6-anhydro-N-acetylmuramate degradation. It participates in amino-sugar metabolism; N-acetylmuramate degradation. Its pathway is cell wall biogenesis; peptidoglycan recycling. Its function is as follows. Specifically catalyzes the cleavage of the D-lactyl ether substituent of MurNAc 6-phosphate, producing GlcNAc 6-phosphate and D-lactate. Together with AnmK, is also required for the utilization of anhydro-N-acetylmuramic acid (anhMurNAc) either imported from the medium or derived from its own cell wall murein, and thus plays a role in cell wall recycling. This Vibrio vulnificus (strain CMCP6) protein is N-acetylmuramic acid 6-phosphate etherase.